The following is a 404-amino-acid chain: Glucose-1-phosphate adenylyltransferase (404 aa).

Residues Tyr-99, Gly-164, 179-180 (EK), and Ser-197 contribute to the alpha-D-glucose 1-phosphate site.

Belongs to the bacterial/plant glucose-1-phosphate adenylyltransferase family. In terms of assembly, homotetramer.

The catalysed reaction is alpha-D-glucose 1-phosphate + ATP + H(+) = ADP-alpha-D-glucose + diphosphate. The protein operates within glycan biosynthesis; glycogen biosynthesis. Functionally, involved in the biosynthesis of ADP-glucose, a building block required for the elongation reactions to produce glycogen. Catalyzes the reaction between ATP and alpha-D-glucose 1-phosphate (G1P) to produce pyrophosphate and ADP-Glc. This chain is Glucose-1-phosphate adenylyltransferase, found in Rhodococcus opacus (strain B4).